A 250-amino-acid chain; its full sequence is Precorrin-4 C(11)-methyltransferase (250 aa).

Belongs to the precorrin methyltransferase family.

It carries out the reaction precorrin-4 + S-adenosyl-L-methionine = precorrin-5 + S-adenosyl-L-homocysteine. It functions in the pathway cofactor biosynthesis; adenosylcobalamin biosynthesis; cob(II)yrinate a,c-diamide from precorrin-2 (aerobic route): step 4/10. In terms of biological role, catalyzes the methylation of C-11 in precorrin-4 to form precorrin-5. This Pseudomonas aeruginosa (strain ATCC 15692 / DSM 22644 / CIP 104116 / JCM 14847 / LMG 12228 / 1C / PRS 101 / PAO1) protein is Precorrin-4 C(11)-methyltransferase (cobM).